Here is a 314-residue protein sequence, read N- to C-terminus: Porphobilinogen deaminase (314 aa).

C243 carries the post-translational modification S-(dipyrrolylmethanemethyl)cysteine.

This sequence belongs to the HMBS family. As to quaternary structure, monomer. It depends on dipyrromethane as a cofactor.

It carries out the reaction 4 porphobilinogen + H2O = hydroxymethylbilane + 4 NH4(+). It functions in the pathway porphyrin-containing compound metabolism; protoporphyrin-IX biosynthesis; coproporphyrinogen-III from 5-aminolevulinate: step 2/4. Tetrapolymerization of the monopyrrole PBG into the hydroxymethylbilane pre-uroporphyrinogen in several discrete steps. This is Porphobilinogen deaminase from Bordetella bronchiseptica (strain ATCC BAA-588 / NCTC 13252 / RB50) (Alcaligenes bronchisepticus).